The chain runs to 480 residues: UDP-glucose 6-dehydrogenase 3 (480 aa).

Residues 8–13 (GAGYVG), Asp33, Arg38, 86–90 (VNTPT), 127–128 (ST), and Glu161 contribute to the NAD(+) site. Residues 157–161 (EFLAE), 216–223 (KLAANAFL), and 256–269 (RIGPKFLNASVGFG) contribute to the substrate site. Cys272 (nucleophile) is an active-site residue. 272 to 275 (CFQK) provides a ligand contact to NAD(+). 334 to 335 (FK) is a binding site for substrate. Arg342 lines the NAD(+) pocket. Ser393 bears the Phosphoserine mark. A substrate-binding site is contributed by Arg447.

The protein belongs to the UDP-glucose/GDP-mannose dehydrogenase family.

It carries out the reaction UDP-alpha-D-glucose + 2 NAD(+) + H2O = UDP-alpha-D-glucuronate + 2 NADH + 3 H(+). The protein operates within nucleotide-sugar biosynthesis; UDP-alpha-D-glucuronate biosynthesis; UDP-alpha-D-glucuronate from UDP-alpha-D-glucose: step 1/1. In terms of biological role, involved in the biosynthesis of UDP-glucuronic acid (UDP-GlcA), providing nucleotide sugars for cell-wall polymers. This is UDP-glucose 6-dehydrogenase 3 (UGD3) from Oryza sativa subsp. japonica (Rice).